A 1659-amino-acid polypeptide reads, in one-letter code: Vitellogenin (1659 aa).

Positions 1-15 (MRAVVLALTLALVAS) are cleaved as a signal peptide. The 639-residue stretch at 24–662 (FAASKTYVYK…DAATLFPRTV (639 aa)) folds into the Vitellogenin domain. N-linked (GlcNAc...) asparagine glycosylation occurs at N1089. 2 stretches are compositionally biased toward low complexity: residues 1090 to 1111 (GTRA…SSSR) and 1119 to 1129 (SSSSSSSSSSR). Residues 1090-1163 (GTRASSSSSS…SQSTSNVISR (74 aa)) form a disordered region. Residues 1389 to 1565 (VKCSMVRDTL…SWVLPSDSCR (177 aa)) form the VWFD domain. 2 disulfide bridges follow: C1391/C1528 and C1414/C1564. N-linked (GlcNAc...) asparagine glycosylation is present at N1627.

In terms of processing, phosvitin, an egg yolk storage protein, is one of the most highly phosphorylated (10%) proteins in nature. In terms of tissue distribution, produced by the liver, secreted into the blood and then sequestered by receptor mediated endocytosis into growing oocytes, where it is generally cleaved, giving rise to the respective yolk components lipovitellin-I, phosvitin, lipovitellin-II.

In terms of biological role, precursor of the major egg-yolk proteins that are sources of nutrients during early development of oviparous organisms. This chain is Vitellogenin (vtg1), found in Oncorhynchus mykiss (Rainbow trout).